Reading from the N-terminus, the 185-residue chain is Elongation factor P (185 aa).

It belongs to the elongation factor P family.

Its subcellular location is the cytoplasm. Its pathway is protein biosynthesis; polypeptide chain elongation. Involved in peptide bond synthesis. Stimulates efficient translation and peptide-bond synthesis on native or reconstituted 70S ribosomes in vitro. Probably functions indirectly by altering the affinity of the ribosome for aminoacyl-tRNA, thus increasing their reactivity as acceptors for peptidyl transferase. This chain is Elongation factor P, found in Mesomycoplasma hyopneumoniae (strain 232) (Mycoplasma hyopneumoniae).